The sequence spans 3414 residues: Hemocyanin 1 (3414 aa).

Residues 1 to 16 (MLSVRLLIVVLALANA) form the signal peptide. Glu-17 lines the a divalent metal cation pocket. The interval 17–437 (ENLVRKSVEH…PPVKHHQSAN (421 aa)) is functional unit a (wall). A Cu cation-binding site is contributed by His-58. Cys-64 and Cys-73 form a disulfide bridge. Positions 74 to 76 (CIH) form a cross-link, 2'-(S-cysteinyl)-histidine (Cys-His). Cu cation is bound by residues His-76, His-85, His-195, His-199, and His-226. Cysteines 185 and 252 form a disulfide. The 2'-(S-cysteinyl)-histidine (Cys-His) cross-link spans 287 to 290 (CELH). Cysteines 339 and 351 form a disulfide. A glycan (N-linked (GlcNAc...) asparagine) is linked at Asn-403. Positions 438–851 (LLVRKNINDL…RVKFDKVPRS (414 aa)) are functional unit b (wall). A Cu cation-binding site is contributed by His-478. A disulfide bridge connects residues Cys-484 and Cys-495. The 2'-(S-cysteinyl)-histidine (Cys-His) cross-link spans 496–498 (CVH). The Cu cation site is built by His-498 and His-507. Asn-545 is a glycosylation site (N-linked (GlcNAc...) asparagine). Cys-608 and Cys-674 are oxidised to a cystine. His-618, His-622, and His-649 together coordinate Cu cation. The stretch at 628–669 (SEHFSMSSLHYTAFDPLFYFHHSNVDRLWAVWQALQMRRHKP) is one WD 1 repeat. Glu-737 lines the a divalent metal cation pocket. Residues 852 to 1271 (RLIRKNVDRL…EVYQAEVTSA (420 aa)) form a functional unit c (wall) region. Residue His-892 coordinates Cu cation. A disulfide bridge connects residues Cys-898 and Cys-909. Residues 910 to 912 (CVH) constitute a cross-link (2'-(S-cysteinyl)-histidine (Cys-His)). Residues His-912, His-921, His-1031, His-1035, and His-1062 each coordinate Cu cation. Cystine bridges form between Cys-1021-Cys-1088 and Cys-1178-Cys-1184. Residues 1041-1082 (AQPYGMASLRYTAFDPLFYLHHSNTDRIWAIWQALQKYRGKP) form a WD 2 repeat. Residues 1272-1680 (NRIRKNIENL…AHTDDGHTEP (409 aa)) form a functional unit d (wall) region. Position 1309 (His-1309) interacts with Cu cation. A disulfide bridge connects residues Cys-1315 and Cys-1324. Residues 1325–1327 (CVH) constitute a cross-link (2'-(S-cysteinyl)-histidine (Cys-His)). Cu cation is bound by residues His-1327, His-1336, His-1440, His-1444, and His-1471. 2 disulfides stabilise this stretch: Cys-1430-Cys-1497 and Cys-1585-Cys-1595. One copy of the WD 3 repeat lies at 1450–1491 (KGKYSMSNLDYAAFDPVFFLHHATTDRIWAIWQDLQRFRKRP). N-linked (GlcNAc...) asparagine glycosylation is present at Asn-1648. Residues 1681-2097 (VMIRKDITQL…HDISSHHLSL (417 aa)) are functional unit e (wall). A Cu cation-binding site is contributed by His-1721. An intrachain disulfide couples Cys-1727 to Cys-1738. Positions 1739–1741 (CVH) form a cross-link, 2'-(S-cysteinyl)-histidine (Cys-His). Cu cation is bound by residues His-1741, His-1750, His-1863, His-1867, and His-1894. Cystine bridges form between Cys-1853–Cys-1920 and Cys-2009–Cys-2015. Residues 1873 to 1914 (KEPYGIGHLHYASYDPLFYIHHSQTDRIWAIWQSLQRFRGLS) form a WD 4 repeat. Residues 2098 to 2517 (NKVRHDLSTL…EDHHSSSMAG (420 aa)) form a functional unit f (wall) region. A Cu cation-binding site is contributed by His-2138. Cys-2144 and Cys-2154 are joined by a disulfide. Asn-2145 carries N-linked (GlcNAc...) asparagine glycosylation. Positions 2155-2157 (CIH) form a cross-link, 2'-(S-cysteinyl)-histidine (Cys-His). Positions 2157, 2166, 2276, 2280, and 2307 each coordinate Cu cation. The WD 5 repeat unit spans residues 2163 to 2199 (PHWHRLYTLQFEQALRRHGSSVAVPYWDWTKPIHNIP). Disulfide bonds link Cys-2266–Cys-2333 and Cys-2420–Cys-2426. Glu-2424 contributes to the a divalent metal cation binding site. Residues 2518–2921 (HGVRKEINTL…EKHHEDHHED (404 aa)) form a functional unit g (internal arc) region. Position 2558 (His-2558) interacts with Cu cation. Cys-2564 and Cys-2574 are disulfide-bonded. Asn-2571 is a glycosylation site (N-linked (GlcNAc...) asparagine). Positions 2575–2577 (CTH) form a cross-link, 2'-(S-cysteinyl)-histidine (Cys-His). Residues His-2577, His-2586, His-2686, His-2690, and His-2717 each coordinate Cu cation. 2 disulfide bridges follow: Cys-2676-Cys-2743 and Cys-2830-Cys-2836. The stretch at 2696–2737 (LTPYGMSTLEYTTYDPLFWLHHANTDRIWAIWQALQEYRGLP) is one WD 6 repeat. The segment at 2922–3414 (ILVRKNIHSL…LRIHVHVDDE (493 aa)) is functional unit h (internal slab). Residue His-2962 participates in Cu cation binding. A disulfide bond links Cys-2968 and Cys-2978. Positions 2979–2981 (CVH) form a cross-link, 2'-(S-cysteinyl)-histidine (Cys-His). Cu cation contacts are provided by His-2981, His-2990, His-3091, His-3095, and His-3122. Cys-3081 and Cys-3148 are joined by a disulfide. A WD 7 repeat occupies 3101-3142 (AEKYSMSTLEYSAFDPYFMIHHASLDKIWIIWQELQKRRVKP). N-linked (GlcNAc...) asparagine glycosylation occurs at Asn-3278. The cysteines at positions 3367 and 3400 are disulfide-linked.

This sequence belongs to the tyrosinase family. Hemocyanin subfamily. In terms of assembly, homo-didecamer, with two decamers assembled face-to-face at their open ends. This didecamer form a stable 25 nM cylinder wall. Probably N-glycosylated. Asn-1280 and Asn-2484 are buried deeply in the protein which make them inaccessible for sugar attachment. Asn-3278 N-glycan is likely to represent a diantennate carbohydrate tree. The didecamer is almost evenly tagged by a total of 120 sugar trees. Hemolymph.

Its subcellular location is the secreted. It localises to the extracellular space. In terms of biological role, hemocyanins are copper-containing oxygen carriers occurring freely dissolved in the hemolymph of many mollusks and arthropods. The chain is Hemocyanin 1 from Megathura crenulata (Giant keyhole limpet).